We begin with the raw amino-acid sequence, 403 residues long: Sorting nexin-32 (403 aa).

Positions 20–168 constitute a PX domain; that stretch reads LQGDSSLQVE…VFLEYGQDLS (149 aa). The stretch at 258-335 forms a coiled coil; sequence NQLRTSFLKL…KARTRNREVR (78 aa).

The protein belongs to the sorting nexin family.

Functionally, may be involved in several stages of intracellular trafficking. This chain is Sorting nexin-32 (SNX32), found in Homo sapiens (Human).